The chain runs to 381 residues: Fatty acid elongase 6 (381 aa).

7 consecutive transmembrane segments (helical) span residues 10-30, 69-89, 107-127, 153-173, 182-202, 216-236, and 280-300; these read IAAA…LVYS, LPYL…SLIV, GLVH…GLMI, LIWL…IMLL, FLHV…LLVA, GVHV…SGIV, and LLQI…NFLV. The HxxHH motif signature appears at 184 to 188; that stretch reads HVYHH. The active-site Nucleophile is histidine 187. Positions 362–381 are disordered; it reads RKNGNGNGQKASLQAMAGSR.

It belongs to the ELO family.

Its subcellular location is the membrane. The protein operates within lipid metabolism; polyunsaturated fatty acid biosynthesis. Involved in the synthesis of fatty acids. Elongates C18 polyunsaturated fatty acids (PUFAs) with a preference for Delta6 PUFAs. The sequence is that of Fatty acid elongase 6 from Leishmania major.